Reading from the N-terminus, the 458-residue chain is tRNA-2-methylthio-N(6)-dimethylallyladenosine synthase (458 aa).

The region spanning 2–118 (PKLYIKTYGC…VFEHVDGILR (117 aa)) is the MTTase N-terminal domain. [4Fe-4S] cluster-binding residues include Cys-11, Cys-47, Cys-81, Cys-170, Cys-174, and Cys-177. The 234-residue stretch at 156–389 (PGVRSTAYVS…LAVVNEIAIR (234 aa)) folds into the Radical SAM core domain. The TRAM domain occupies 392–455 (RDLVGTVQEV…GFTLYGVPCP (64 aa)).

Belongs to the methylthiotransferase family. MiaB subfamily. Monomer. It depends on [4Fe-4S] cluster as a cofactor.

The protein resides in the cytoplasm. The enzyme catalyses N(6)-dimethylallyladenosine(37) in tRNA + (sulfur carrier)-SH + AH2 + 2 S-adenosyl-L-methionine = 2-methylsulfanyl-N(6)-dimethylallyladenosine(37) in tRNA + (sulfur carrier)-H + 5'-deoxyadenosine + L-methionine + A + S-adenosyl-L-homocysteine + 2 H(+). Functionally, catalyzes the methylthiolation of N6-(dimethylallyl)adenosine (i(6)A), leading to the formation of 2-methylthio-N6-(dimethylallyl)adenosine (ms(2)i(6)A) at position 37 in tRNAs that read codons beginning with uridine. This Akkermansia muciniphila (strain ATCC BAA-835 / DSM 22959 / JCM 33894 / BCRC 81048 / CCUG 64013 / CIP 107961 / Muc) protein is tRNA-2-methylthio-N(6)-dimethylallyladenosine synthase.